The following is a 191-amino-acid chain: Potassium-transporting ATPase KdpC subunit (191 aa).

A helical membrane pass occupies residues 10–30 (ITLVFCVFFSVFYILVLWLFA).

It belongs to the KdpC family. In terms of assembly, the system is composed of three essential subunits: KdpA, KdpB and KdpC.

It is found in the cell inner membrane. Part of the high-affinity ATP-driven potassium transport (or Kdp) system, which catalyzes the hydrolysis of ATP coupled with the electrogenic transport of potassium into the cytoplasm. This subunit acts as a catalytic chaperone that increases the ATP-binding affinity of the ATP-hydrolyzing subunit KdpB by the formation of a transient KdpB/KdpC/ATP ternary complex. This Bacteroides fragilis (strain YCH46) protein is Potassium-transporting ATPase KdpC subunit.